A 439-amino-acid polypeptide reads, in one-letter code: ATP-dependent DNA helicase dda (439 aa).

32-39 (GPAGTGKT) is an ATP binding site.

Monomer. Interacts with UvsX and gene 32 protein.

It catalyses the reaction Couples ATP hydrolysis with the unwinding of duplex DNA at the replication fork by translocating in the 5'-3' direction. This creates two antiparallel DNA single strands (ssDNA). The leading ssDNA polymer is the template for DNA polymerase III holoenzyme which synthesizes a continuous strand.. The enzyme catalyses ATP + H2O = ADP + phosphate + H(+). Its function is as follows. DNA helicase that stimulates viral DNA replication and recombination. Plays a role in T4 DNA replication initiation by selecting and activating DNA origins. Acts by dissociating and reassociating with the DNA molecule being unwound. Unwinds DNA as a monomer in a 5'-3' direction at a rate of 250 bp/s and can efficiently displace proteins from the DNA. In Enterobacteria phage T4 (Bacteriophage T4), this protein is ATP-dependent DNA helicase dda (dda).